The chain runs to 164 residues: Lipoprotein signal peptidase (164 aa).

A run of 3 helical transmembrane segments spans residues 12-32, 70-90, and 102-122; these read WLWL…LILQ, WFFA…MYRS, and ALII…GFVV. Catalysis depends on residues Asp123 and Asp141. The chain crosses the membrane as a helical span at residues 137–157; sequence FNLADTAICVGAALIVLEGFL.

This sequence belongs to the peptidase A8 family.

It is found in the cell inner membrane. It catalyses the reaction Release of signal peptides from bacterial membrane prolipoproteins. Hydrolyzes -Xaa-Yaa-Zaa-|-(S,diacylglyceryl)Cys-, in which Xaa is hydrophobic (preferably Leu), and Yaa (Ala or Ser) and Zaa (Gly or Ala) have small, neutral side chains.. The protein operates within protein modification; lipoprotein biosynthesis (signal peptide cleavage). This protein specifically catalyzes the removal of signal peptides from prolipoproteins. The protein is Lipoprotein signal peptidase of Shigella flexneri.